The chain runs to 438 residues: UDP-N-acetylmuramoylalanine--D-glutamate ligase (438 aa).

112-118 (GSNGKST) provides a ligand contact to ATP.

This sequence belongs to the MurCDEF family.

It localises to the cytoplasm. It carries out the reaction UDP-N-acetyl-alpha-D-muramoyl-L-alanine + D-glutamate + ATP = UDP-N-acetyl-alpha-D-muramoyl-L-alanyl-D-glutamate + ADP + phosphate + H(+). It functions in the pathway cell wall biogenesis; peptidoglycan biosynthesis. Its function is as follows. Cell wall formation. Catalyzes the addition of glutamate to the nucleotide precursor UDP-N-acetylmuramoyl-L-alanine (UMA). The chain is UDP-N-acetylmuramoylalanine--D-glutamate ligase from Escherichia coli O6:K15:H31 (strain 536 / UPEC).